Here is a 370-residue protein sequence, read N- to C-terminus: MEILMTVSRIASICTMGANASALEKEIGPEQFPVNEHYFGLVNFGNTCYCNSVLQALYFCRPFREKVLAYKSQPRKKENLLTCLSDLFHSIATQKKKVGVIPPKKFITRLRKENELFDNYMQQDAHEFLNYLLNTIADILQEERKQEKQNGRIPNGNIDNENNNNTPDPTWVHEIFQGTLTNETRCLTCETISSKDEDFLDLSVDVEQNTSITHCLRGFSNTETLCSEYKYYCEECRSKQEAHKRMKVKKLPMILALHLKRFKYMDQLHRYTKLSYRVVFPLELRLFNTSGDATNPDRMYDLVAVVVHCGSGPNRGHYIAIVKSHDFWLLFDDDIVEKIDAQAIEEFYGLTSDISKNSESGYILFYQSRD.

The 331-residue stretch at 39-369 (FGLVNFGNTC…SGYILFYQSR (331 aa)) folds into the USP domain. C48 (nucleophile) is an active-site residue. Residues 145–168 (KQEKQNGRIPNGNIDNENNNNTPD) are disordered. A compositionally biased stretch (low complexity) spans 155–165 (NGNIDNENNNN). 4 residues coordinate Zn(2+): C186, C189, C233, and C236. The Proton acceptor role is filled by H317.

The protein belongs to the peptidase C19 family. USP12/USP46 subfamily. In terms of assembly, interacts with WDR48.

The enzyme catalyses Thiol-dependent hydrolysis of ester, thioester, amide, peptide and isopeptide bonds formed by the C-terminal Gly of ubiquitin (a 76-residue protein attached to proteins as an intracellular targeting signal).. In terms of biological role, deubiquitinating enzyme. Has almost no deubiquitinating activity by itself and requires the interaction with wdr48 to have a high activity. This is Ubiquitin carboxyl-terminal hydrolase 12-B (usp12-b) from Xenopus laevis (African clawed frog).